Reading from the N-terminus, the 466-residue chain is Cysteine--tRNA ligase (466 aa).

Zn(2+) is bound at residue C27. The 'HIGH' region signature appears at 29–39; that stretch reads PTVYDLAHIGN. Residues C211, H236, and E240 each contribute to the Zn(2+) site. Residues 270-274 carry the 'KMSKS' region motif; it reads KMSKS. K273 is a binding site for ATP.

The protein belongs to the class-I aminoacyl-tRNA synthetase family. Monomer. The cofactor is Zn(2+).

It is found in the cytoplasm. The catalysed reaction is tRNA(Cys) + L-cysteine + ATP = L-cysteinyl-tRNA(Cys) + AMP + diphosphate. This chain is Cysteine--tRNA ligase, found in Anaplasma marginale (strain St. Maries).